Consider the following 127-residue polypeptide: Small ribosomal subunit protein uS11 (127 aa).

This sequence belongs to the universal ribosomal protein uS11 family. Part of the 30S ribosomal subunit. Interacts with proteins S7 and S18. Binds to IF-3.

Located on the platform of the 30S subunit, it bridges several disparate RNA helices of the 16S rRNA. Forms part of the Shine-Dalgarno cleft in the 70S ribosome. This chain is Small ribosomal subunit protein uS11, found in Chlorobium luteolum (strain DSM 273 / BCRC 81028 / 2530) (Pelodictyon luteolum).